The following is a 333-amino-acid chain: MRKIKVAPFMPTEVEVNEISANRAEIVAYPFESGYAVTLAHPLRRLILGSSIGYAPISVKIEGAAHEFDNIRGMHEDVAVFIINLKNIRFKIKDGSDRVELKYSFSGYKEVTAQDLNNDQIEVVNGDLPLATLNEDAELNFTMVIAKGIGYVPSEDLRDEVAPDSIALDAFFTPVRKANYKIEPVLVEDNPNFEKITFDIETDAQIGPVEAFTNALEVMNKQLSVFNGVLDVDISTTLPKRTNDDNELKPFLAAVDALGLSARSFNSLDRAGIKFLGELVLMSENEIKNIKNLGKKSLDETNECLVEHGFGPEFELKENTRANLVKKLEQLKA.

The tract at residues 1 to 227 is alpha N-terminal domain (alpha-NTD); that stretch reads MRKIKVAPFM…VMNKQLSVFN (227 aa). Residues 247 to 333 form an alpha C-terminal domain (alpha-CTD) region; that stretch reads ELKPFLAAVD…LVKKLEQLKA (87 aa).

It belongs to the RNA polymerase alpha chain family. As to quaternary structure, homodimer. The RNAP catalytic core consists of 2 alpha, 1 beta, 1 beta' and 1 omega subunit. When a sigma factor is associated with the core the holoenzyme is formed, which can initiate transcription.

It catalyses the reaction RNA(n) + a ribonucleoside 5'-triphosphate = RNA(n+1) + diphosphate. DNA-dependent RNA polymerase catalyzes the transcription of DNA into RNA using the four ribonucleoside triphosphates as substrates. The sequence is that of DNA-directed RNA polymerase subunit alpha from Sulfurovum sp. (strain NBC37-1).